The primary structure comprises 95 residues: YcgL domain-containing protein Sden_1630 (95 aa).

The YcgL domain maps to 1–85 (MICTVYKSRR…PKANLLEEHK (85 aa)).

The polypeptide is YcgL domain-containing protein Sden_1630 (Shewanella denitrificans (strain OS217 / ATCC BAA-1090 / DSM 15013)).